The chain runs to 430 residues: Adenylosuccinate synthetase (430 aa).

GTP is bound by residues 12-18 and 40-42; these read GDEGKGK and GHT. Aspartate 13 (proton acceptor) is an active-site residue. Mg(2+)-binding residues include aspartate 13 and glycine 40. Residues 13–16, 38–41, threonine 128, arginine 142, glutamine 223, threonine 238, and arginine 302 contribute to the IMP site; these read DEGK and NAGH. Histidine 41 acts as the Proton donor in catalysis. 298–304 provides a ligand contact to substrate; sequence VNTGRKR. GTP contacts are provided by residues arginine 304, 330–332, and 412–414; these read KLD and GVG.

The protein belongs to the adenylosuccinate synthetase family. Homodimer. It depends on Mg(2+) as a cofactor.

The protein localises to the cytoplasm. The enzyme catalyses IMP + L-aspartate + GTP = N(6)-(1,2-dicarboxyethyl)-AMP + GDP + phosphate + 2 H(+). It participates in purine metabolism; AMP biosynthesis via de novo pathway; AMP from IMP: step 1/2. In terms of biological role, plays an important role in the de novo pathway of purine nucleotide biosynthesis. Catalyzes the first committed step in the biosynthesis of AMP from IMP. This Corynebacterium glutamicum (strain ATCC 13032 / DSM 20300 / JCM 1318 / BCRC 11384 / CCUG 27702 / LMG 3730 / NBRC 12168 / NCIMB 10025 / NRRL B-2784 / 534) protein is Adenylosuccinate synthetase.